A 168-amino-acid polypeptide reads, in one-letter code: uncharacterized protein (168 aa).

2 4Fe-4S ferredoxin-type domains span residues 48–78 (KIPKTVIEELCIGCEGCANVCPTKAIEMIPI) and 91–122 (KIPKINPEKCVYCLYCHDFCPVFSVFNEISPI). [4Fe-4S] cluster is bound by residues Cys58, Cys61, Cys64, Cys68, Cys100, Cys103, Cys106, and Cys110.

This is an uncharacterized protein from Methanocaldococcus jannaschii (strain ATCC 43067 / DSM 2661 / JAL-1 / JCM 10045 / NBRC 100440) (Methanococcus jannaschii).